A 474-amino-acid polypeptide reads, in one-letter code: Magnesium transporter MRS2-A, chloroplastic (474 aa).

A chloroplast-targeting transit peptide spans 1-55 (MASVSSSPSYSSQAAVLLLLHQPPHQHGHGGACLRYRGSQSQGRGNAVATSLGLS). Residues 79-129 (GKDGRAVTKDEEEEAAAAAVEEEGEVEVRREEDKPGDDGSREAAARGSGSG) form a disordered region. A compositionally biased stretch (acidic residues) spans 88 to 103 (DEEEEAAAAAVEEEGE). Residues 104-122 (VEVRREEDKPGDDGSREAA) show a composition bias toward basic and acidic residues. 2 helical membrane passes run 412–432 (LLLQ…GIFG) and 444–464 (WAFW…FFIM). Positions 432-434 (GMN) match the Required for magnesium transport activity motif.

This sequence belongs to the CorA metal ion transporter (MIT) (TC 1.A.35.5) family.

The protein resides in the plastid. The protein localises to the chloroplast membrane. In terms of biological role, magnesium transporter that may mediate the influx of magnesium in chloroplast. The protein is Magnesium transporter MRS2-A, chloroplastic (MRS2-A) of Oryza sativa subsp. japonica (Rice).